We begin with the raw amino-acid sequence, 504 residues long: Cytochrome P450 2D10 (504 aa).

Ser-382 carries an O-linked (GlcNAc) serine glycan. Residue Cys-446 participates in heme binding.

Belongs to the cytochrome P450 family. Heme is required as a cofactor.

The protein resides in the endoplasmic reticulum membrane. It is found in the microsome membrane. It carries out the reaction an organic molecule + reduced [NADPH--hemoprotein reductase] + O2 = an alcohol + oxidized [NADPH--hemoprotein reductase] + H2O + H(+). Cytochromes P450 are a group of heme-thiolate monooxygenases. In liver microsomes, this enzyme is involved in an NADPH-dependent electron transport pathway. It oxidizes a variety of structurally unrelated compounds, including steroids, fatty acids, and xenobiotics. The polypeptide is Cytochrome P450 2D10 (Cyp2d10) (Rattus norvegicus (Rat)).